The primary structure comprises 290 residues: MTYSEKALIFCISVNLKFILVHINFQSKRKEGNICGKKPTYSVRMRASRNAPHEQGGKHISGGERLITYSGLQEAVDGLLHKGFSHSRGIPDFMQIQLESINEPIETIRPLPVAFHQSDTPEKGQAIARKLLQKAGIPPHMIEKAYENIAEYAEARGAVLFDIRAGERIDGRGNRGVRVSRMDWPSHDFQKWAFTHNMPENSRIKEAHAIAAKVCAHPGIIAELCWSDDPDYITGYVAAKKLGYQRIAKMKNAGDESGCRIFFTDGSIDTESCIHFLEKQPVFIQREENI.

This sequence belongs to the BioW family. As to quaternary structure, homodimer. Requires Mg(2+) as cofactor.

It catalyses the reaction heptanedioate + ATP + CoA = 6-carboxyhexanoyl-CoA + AMP + diphosphate. The protein operates within metabolic intermediate metabolism; pimeloyl-CoA biosynthesis; pimeloyl-CoA from pimelate: step 1/1. Catalyzes the transformation of pimelate into pimeloyl-CoA with concomitant hydrolysis of ATP to AMP. The polypeptide is 6-carboxyhexanoate--CoA ligase (Bacillus amyloliquefaciens (Bacillus velezensis)).